The sequence spans 131 residues: Small ribosomal subunit protein uS8 (131 aa).

Belongs to the universal ribosomal protein uS8 family. As to quaternary structure, part of the 30S ribosomal subunit. Contacts proteins S5 and S12.

One of the primary rRNA binding proteins, it binds directly to 16S rRNA central domain where it helps coordinate assembly of the platform of the 30S subunit. The chain is Small ribosomal subunit protein uS8 from Halorhodospira halophila (strain DSM 244 / SL1) (Ectothiorhodospira halophila (strain DSM 244 / SL1)).